A 242-amino-acid chain; its full sequence is UPF0309 protein BSUIS_B0903 (242 aa).

Positions 30–214 constitute an SIS domain; the sequence is AADLIAAAAR…ARLVGEGDAP (185 aa).

It belongs to the UPF0309 family.

This is UPF0309 protein BSUIS_B0903 from Brucella suis (strain ATCC 23445 / NCTC 10510).